We begin with the raw amino-acid sequence, 300 residues long: Ribosomal protein L11 methyltransferase (300 aa).

S-adenosyl-L-methionine is bound by residues T152, G173, D195, and N234.

The protein belongs to the methyltransferase superfamily. PrmA family.

It localises to the cytoplasm. It carries out the reaction L-lysyl-[protein] + 3 S-adenosyl-L-methionine = N(6),N(6),N(6)-trimethyl-L-lysyl-[protein] + 3 S-adenosyl-L-homocysteine + 3 H(+). In terms of biological role, methylates ribosomal protein L11. The protein is Ribosomal protein L11 methyltransferase of Burkholderia pseudomallei (strain 1710b).